A 448-amino-acid polypeptide reads, in one-letter code: MGLSPVNIFKPFGLGRAKAVIAAVSGGSDSLGLLFLLKDYLSTLESPPVLIAVTVDHKLRAESALEAENVGLLCQKHGIMHCVLSWDDPKPAHGLAAAARTARYRLLVQAARDAGAGFIVTGHTENDQIETFLMRKARSGHCEARGLAAMSPRSLLEGSVELARPLLTVSRQALRDELTRRGIAWVDDPSNANIDYERPRVRLGVAAEADGQEVLEQIAQAGAARERDNAALVEALADPATLGVDAAGMMFLNADCYAALSPGARQLFSGLLASIAGGRRFLPGDGERRRIERMLSGQDAPRRLTVFGALIERGEKGAPHRFRRERRNLPKLDLVPGQHIVWDGRFCFFNSGGRSFEIAPPGRQELIDFLKNSGRDIESRRCEALLISPALYEGGKLASVPFLPGAEWPQGVHIERHFAIFDHVLPGHDFALAQAVEARLGRACAEIS.

An ATP-binding site is contributed by 25–30 (SGGSDS).

This sequence belongs to the tRNA(Ile)-lysidine synthase family.

It is found in the cytoplasm. The enzyme catalyses cytidine(34) in tRNA(Ile2) + L-lysine + ATP = lysidine(34) in tRNA(Ile2) + AMP + diphosphate + H(+). Its function is as follows. Ligates lysine onto the cytidine present at position 34 of the AUA codon-specific tRNA(Ile) that contains the anticodon CAU, in an ATP-dependent manner. Cytidine is converted to lysidine, thus changing the amino acid specificity of the tRNA from methionine to isoleucine. The chain is tRNA(Ile)-lysidine synthase from Brucella canis (strain ATCC 23365 / NCTC 10854 / RM-666).